The sequence spans 648 residues: Transketolase (648 aa).

H22 is a binding site for substrate. Thiamine diphosphate is bound by residues H62 and 109–111 (GPL). A Mg(2+)-binding site is contributed by D150. Thiamine diphosphate contacts are provided by G151 and N180. Residues N180 and V182 each contribute to the Mg(2+) site. Residues H252, R345, and S372 each coordinate substrate. A thiamine diphosphate-binding site is contributed by H252. E397 functions as the Proton donor in the catalytic mechanism. A thiamine diphosphate-binding site is contributed by F423. Positions 447, 455, and 506 each coordinate substrate.

Belongs to the transketolase family. As to quaternary structure, homodimer. Mg(2+) is required as a cofactor. Ca(2+) serves as cofactor. It depends on Mn(2+) as a cofactor. The cofactor is Co(2+). Requires thiamine diphosphate as cofactor.

The enzyme catalyses D-sedoheptulose 7-phosphate + D-glyceraldehyde 3-phosphate = aldehydo-D-ribose 5-phosphate + D-xylulose 5-phosphate. Its function is as follows. Catalyzes the transfer of a two-carbon ketol group from a ketose donor to an aldose acceptor, via a covalent intermediate with the cofactor thiamine pyrophosphate. In Mycoplasma genitalium (strain ATCC 33530 / DSM 19775 / NCTC 10195 / G37) (Mycoplasmoides genitalium), this protein is Transketolase (tkt).